The primary structure comprises 180 residues: Bifunctional protein PyrR (180 aa).

Substrate-binding positions include 39-40, 103-111, and Arg136; these read TR and DDVLYTGRT. The PRPP-binding signature appears at 99–111; it reads VILIDDVLYTGRT.

Belongs to the purine/pyrimidine phosphoribosyltransferase family. PyrR subfamily. In terms of assembly, homodimer and homohexamer; in equilibrium.

The enzyme catalyses UMP + diphosphate = 5-phospho-alpha-D-ribose 1-diphosphate + uracil. Functionally, regulates transcriptional attenuation of the pyrimidine nucleotide (pyr) operon by binding in a uridine-dependent manner to specific sites on pyr mRNA. This disrupts an antiterminator hairpin in the RNA and favors formation of a downstream transcription terminator, leading to a reduced expression of downstream genes. Its function is as follows. Also displays a weak uracil phosphoribosyltransferase activity which is not physiologically significant. The sequence is that of Bifunctional protein PyrR from Halalkalibacterium halodurans (strain ATCC BAA-125 / DSM 18197 / FERM 7344 / JCM 9153 / C-125) (Bacillus halodurans).